The primary structure comprises 525 residues: Glutamate synthase large subunit-like protein YerD (525 aa).

Residues 4 to 24 traverse the membrane as a helical segment; it reads IIIALIAFIIGIIAIPIVLFA.

This sequence belongs to the glutamate synthase family.

The protein localises to the cell membrane. This Bacillus subtilis (strain 168) protein is Glutamate synthase large subunit-like protein YerD (yerD).